We begin with the raw amino-acid sequence, 505 residues long: Elsinochrome transporter 1 (505 aa).

A compositionally biased stretch (gly residues) spans 1 to 10 (MALSGLGSGP). The disordered stretch occupies residues 1-25 (MALSGLGSGPEGNPNNHQGKAIPTL). The helical transmembrane segment at 35-55 (FLFSWVSFLVPFWSWYPFSPL) threads the bilayer. N-linked (GlcNAc...) asparagine glycosylation is found at Asn64 and Asn80. The tract at residues 221–295 (DTPTGAGKPP…TEKGESLPLT (75 aa)) is disordered. A compositionally biased stretch (low complexity) spans 255–267 (TPSSPDRSSSTNS). Helical transmembrane passes span 313–333 (VIFSGPTLVLGACYFCTFGAE), 348–368 (LGLGLQNAGNLAAIFGLLNIV), 391–411 (KALLHTYCVMTGVFCIAIGLA), 417–437 (ATLVGLVSGGLAFFLEGANGL), 449–469 (VVSGFTGACGNLGGIVFAIVF), and 479–499 (VFWIIGAIIIGLQVATCWIKP).

It belongs to the major facilitator superfamily. Nitrate/nitrite porter (TC 2.A.1.8) family.

Its subcellular location is the cell membrane. Its function is as follows. Major facilitator-type transporter; part of the gene cluster that mediates the biosynthesis of elsinochromes, pigments consisting of at least four interconvertible tautomers (A, B, C and D) that have a core phenolic quinone to which various side chains are attached and which play an important role in fungal pathogenesis. Once elsinochrome is synthesized, it must be exported outside the fungal cells, which is probably accomplished by the ECT1 transporter, to avoid toxicity. The polypeptide is Elsinochrome transporter 1 (Elsinoe fawcettii (Citrus scab fungus)).